The sequence spans 144 residues: Protein MIX23 (144 aa).

The residue at position 2 (alanine 2) is an N-acetylalanine. Residues 82 to 120 (VKSLREEREKNLDDLTLLKRLRKEQTKLKWMQSELNVEE) adopt a coiled-coil conformation. Residue lysine 100 is modified to N6-acetyllysine.

Belongs to the MIX23 family.

In Mus musculus (Mouse), this protein is Protein MIX23.